A 486-amino-acid polypeptide reads, in one-letter code: ATP synthase subunit beta 2 (486 aa).

166-173 (GGAGVGKT) serves as a coordination point for ATP.

This sequence belongs to the ATPase alpha/beta chains family. F-type ATPases have 2 components, CF(1) - the catalytic core - and CF(0) - the membrane proton channel. CF(1) has five subunits: alpha(3), beta(3), gamma(1), delta(1), epsilon(1). CF(0) has three main subunits: a(1), b(2) and c(9-12). The alpha and beta chains form an alternating ring which encloses part of the gamma chain. CF(1) is attached to CF(0) by a central stalk formed by the gamma and epsilon chains, while a peripheral stalk is formed by the delta and b chains.

It localises to the cell inner membrane. It carries out the reaction ATP + H2O + 4 H(+)(in) = ADP + phosphate + 5 H(+)(out). Functionally, produces ATP from ADP in the presence of a proton gradient across the membrane. The catalytic sites are hosted primarily by the beta subunits. In Gluconobacter oxydans (strain 621H) (Gluconobacter suboxydans), this protein is ATP synthase subunit beta 2.